The primary structure comprises 162 residues: MELIVDFSSDLQTEKYNMFIDTLYENNHLENYIKKVLNLEKIESDRPLYLSLLLTDNENIQVINREYRDKDAPTDVISFAYHETEDFNIGSYDTLGDIIISLERVEEQASEYNHSFEREFYYVLTHGILHILGYDHIEEEDKKLMREREEAILSSFGYTRDK.

Zn(2+) contacts are provided by His126, His130, and His136.

Belongs to the endoribonuclease YbeY family. Zn(2+) is required as a cofactor.

The protein localises to the cytoplasm. In terms of biological role, single strand-specific metallo-endoribonuclease involved in late-stage 70S ribosome quality control and in maturation of the 3' terminus of the 16S rRNA. The polypeptide is Endoribonuclease YbeY (Fusobacterium nucleatum subsp. nucleatum (strain ATCC 25586 / DSM 15643 / BCRC 10681 / CIP 101130 / JCM 8532 / KCTC 2640 / LMG 13131 / VPI 4355)).